Consider the following 700-residue polypeptide: Elongation factor G (700 aa).

In terms of domain architecture, tr-type G spans 8–290 (ERYRNIGISA…AVIDYLPAPT (283 aa)). GTP-binding positions include 17–24 (AHIDAGKT), 88–92 (DTPGH), and 142–145 (NKMD).

It belongs to the TRAFAC class translation factor GTPase superfamily. Classic translation factor GTPase family. EF-G/EF-2 subfamily.

Its subcellular location is the cytoplasm. In terms of biological role, catalyzes the GTP-dependent ribosomal translocation step during translation elongation. During this step, the ribosome changes from the pre-translocational (PRE) to the post-translocational (POST) state as the newly formed A-site-bound peptidyl-tRNA and P-site-bound deacylated tRNA move to the P and E sites, respectively. Catalyzes the coordinated movement of the two tRNA molecules, the mRNA and conformational changes in the ribosome. This is Elongation factor G from Glaesserella parasuis serovar 5 (strain SH0165) (Haemophilus parasuis).